The chain runs to 231 residues: tRNA (guanine-N(7)-)-methyltransferase (231 aa).

The S-adenosyl-L-methionine site is built by E62, E87, D114, and D137. D137 is a catalytic residue. Residues K141, D173, and 210–213 (TKFE) contribute to the substrate site.

The protein belongs to the class I-like SAM-binding methyltransferase superfamily. TrmB family.

The catalysed reaction is guanosine(46) in tRNA + S-adenosyl-L-methionine = N(7)-methylguanosine(46) in tRNA + S-adenosyl-L-homocysteine. Its pathway is tRNA modification; N(7)-methylguanine-tRNA biosynthesis. Catalyzes the formation of N(7)-methylguanine at position 46 (m7G46) in tRNA. The protein is tRNA (guanine-N(7)-)-methyltransferase of Methylococcus capsulatus (strain ATCC 33009 / NCIMB 11132 / Bath).